We begin with the raw amino-acid sequence, 123 residues long: Small ribosomal subunit protein uS12 (123 aa).

Asp-89 carries the post-translational modification 3-methylthioaspartic acid. Residues Ser-101–Lys-123 form a disordered region. Over residues Ser-113–Lys-123 the composition is skewed to basic residues.

Belongs to the universal ribosomal protein uS12 family. As to quaternary structure, part of the 30S ribosomal subunit. Contacts proteins S8 and S17. May interact with IF1 in the 30S initiation complex.

Functionally, with S4 and S5 plays an important role in translational accuracy. In terms of biological role, interacts with and stabilizes bases of the 16S rRNA that are involved in tRNA selection in the A site and with the mRNA backbone. Located at the interface of the 30S and 50S subunits, it traverses the body of the 30S subunit contacting proteins on the other side and probably holding the rRNA structure together. The combined cluster of proteins S8, S12 and S17 appears to hold together the shoulder and platform of the 30S subunit. The protein is Small ribosomal subunit protein uS12 of Laribacter hongkongensis (strain HLHK9).